The chain runs to 367 residues: UDP-N-acetylglucosamine--N-acetylmuramyl-(pentapeptide) pyrophosphoryl-undecaprenol N-acetylglucosamine transferase (367 aa).

UDP-N-acetyl-alpha-D-glucosamine contacts are provided by residues 15–17 (TGG), N127, R163, S191, I249, and Q294.

It belongs to the glycosyltransferase 28 family. MurG subfamily.

The protein localises to the cell inner membrane. It carries out the reaction di-trans,octa-cis-undecaprenyl diphospho-N-acetyl-alpha-D-muramoyl-L-alanyl-D-glutamyl-meso-2,6-diaminopimeloyl-D-alanyl-D-alanine + UDP-N-acetyl-alpha-D-glucosamine = di-trans,octa-cis-undecaprenyl diphospho-[N-acetyl-alpha-D-glucosaminyl-(1-&gt;4)]-N-acetyl-alpha-D-muramoyl-L-alanyl-D-glutamyl-meso-2,6-diaminopimeloyl-D-alanyl-D-alanine + UDP + H(+). It participates in cell wall biogenesis; peptidoglycan biosynthesis. In terms of biological role, cell wall formation. Catalyzes the transfer of a GlcNAc subunit on undecaprenyl-pyrophosphoryl-MurNAc-pentapeptide (lipid intermediate I) to form undecaprenyl-pyrophosphoryl-MurNAc-(pentapeptide)GlcNAc (lipid intermediate II). The chain is UDP-N-acetylglucosamine--N-acetylmuramyl-(pentapeptide) pyrophosphoryl-undecaprenol N-acetylglucosamine transferase from Burkholderia pseudomallei (strain 1710b).